A 196-amino-acid chain; its full sequence is MTLQCTKSAGHWRVVVWDEEGFQGRRHEFTAECPSVLDLGFETVRSLKVLSGAWVGFEHAGFQGQQYVLERGDYPGWDAWGGNTAYPAERLTSFRPVACANHRDSRLTIFEQENFLGRKGELSDDYPSLQAMGWDGTEVGSFHVQSGAWVCSQFPGYRGFQYVLESDHHSGDYKHFREWGSHAHTFQVQSVRRIQQ.

An N-acetylthreonine modification is found at Thr2. The N-terminal arm stretch occupies residues 2–11; the sequence is TLQCTKSAGH. 2 Beta/gamma crystallin 'Greek key' domains span residues 12-51 and 52-98; these read WRVV…KVLS and GAWV…RPVA. The tract at residues 99–104 is connecting peptide; it reads CANHRD. 2 consecutive Beta/gamma crystallin 'Greek key' domains span residues 105–146 and 147–195; these read SRLT…HVQS and GAWV…RRIQ.

Homo/heterodimer, or complexes of higher-order. The structure of beta-crystallin oligomers seems to be stabilized through interactions between the N-terminal arms.

Its function is as follows. Crystallins are the dominant structural components of the vertebrate eye lens. The protein is Beta-crystallin A4 (Cryba4) of Rattus norvegicus (Rat).